The primary structure comprises 412 residues: 43 kDa receptor-associated protein of the synapse (412 aa).

Glycine 2 carries N-myristoyl glycine lipidation. 7 TPR repeats span residues 6 to 39 (TKQQ…SSDL), 83 to 116 (LESY…PGTR), 123 to 156 (GQVS…AHNN), 163 to 196 (CRVC…VNNY), 206 to 239 (AMSQ…ALQH), 246 to 279 (ALCL…MTEI), and 286 to 319 (VQAL…AEEV). Residue tyrosine 196 is modified to Phosphotyrosine. An RING-type zinc finger spans residues 363–403 (CGLCGESIGEKNSRLQALPCSHIFHLRCLQNNGTRSCPNCR). Serine 405 is subject to Phosphoserine.

The protein belongs to the RAPsyn family. Post-translationally, ubiquitinated by the BCR(KLHL8) complex, leading to its degradation.

It is found in the cell membrane. The protein resides in the postsynaptic cell membrane. It localises to the cytoplasm. Its subcellular location is the cytoskeleton. Postsynaptic protein required for clustering of nicotinic acetylcholine receptors (nAChRs) at the neuromuscular junction. It may link the receptor to the underlying postsynaptic cytoskeleton, possibly by direct association with actin or spectrin. The chain is 43 kDa receptor-associated protein of the synapse (RAPSN) from Homo sapiens (Human).